A 647-amino-acid polypeptide reads, in one-letter code: Sialidase (647 aa).

An N-terminal signal peptide occupies residues 1 to 37; it reads MTANPYLRRLPRRRAVSFLLAPALAAATVAGASPAQA. Position 68 (Arg68) interacts with substrate. Catalysis depends on Asp92, which acts as the Proton acceptor. BNR repeat units lie at residues 102–113, 175–186, and 239–250; these read RRSTDGGRTWGE, ATSTDGGLTWSH, and VYSDDHGRTWRA. The active-site Nucleophile is Glu260. Residue Arg276 coordinates substrate. BNR repeat units lie at residues 287-298 and 348-359; these read AVSTDGGHSYGP and RMSCDDGQTWPV. The active-site Nucleophile is the Tyr370. Positions 496–646 constitute an F5/8 type C domain; sequence TFTVTVGLLD…AVAELEVEGQ (151 aa).

It belongs to the glycosyl hydrolase 33 family.

It is found in the secreted. It carries out the reaction Hydrolysis of alpha-(2-&gt;3)-, alpha-(2-&gt;6)-, alpha-(2-&gt;8)- glycosidic linkages of terminal sialic acid residues in oligosaccharides, glycoproteins, glycolipids, colominic acid and synthetic substrates.. Its function is as follows. To release sialic acids for use as carbon and energy sources for this non-pathogenic bacterium while in pathogenic microorganisms, sialidases have been suggested to be pathogenic factors. In Micromonospora viridifaciens, this protein is Sialidase (nedA).